We begin with the raw amino-acid sequence, 475 residues long: Ribulose bisphosphate carboxylase large chain (475 aa).

A propeptide spanning residues 1-2 (MS) is cleaved from the precursor. Proline 3 carries the post-translational modification N-acetylproline. N6,N6,N6-trimethyllysine is present on lysine 14. Residues asparagine 123 and threonine 173 each coordinate substrate. The Proton acceptor role is filled by lysine 175. Residue lysine 177 participates in substrate binding. Residues lysine 201, aspartate 203, and glutamate 204 each coordinate Mg(2+). Lysine 201 carries the N6-carboxylysine modification. Histidine 294 serves as the catalytic Proton acceptor. Substrate contacts are provided by arginine 295, histidine 327, and serine 379.

Belongs to the RuBisCO large chain family. Type I subfamily. In terms of assembly, heterohexadecamer of 8 large chains and 8 small chains; disulfide-linked. The disulfide link is formed within the large subunit homodimers. It depends on Mg(2+) as a cofactor. The disulfide bond which can form in the large chain dimeric partners within the hexadecamer appears to be associated with oxidative stress and protein turnover.

The protein localises to the plastid. It localises to the chloroplast. The enzyme catalyses 2 (2R)-3-phosphoglycerate + 2 H(+) = D-ribulose 1,5-bisphosphate + CO2 + H2O. It carries out the reaction D-ribulose 1,5-bisphosphate + O2 = 2-phosphoglycolate + (2R)-3-phosphoglycerate + 2 H(+). Its function is as follows. RuBisCO catalyzes two reactions: the carboxylation of D-ribulose 1,5-bisphosphate, the primary event in carbon dioxide fixation, as well as the oxidative fragmentation of the pentose substrate in the photorespiration process. Both reactions occur simultaneously and in competition at the same active site. This is Ribulose bisphosphate carboxylase large chain from Viscum album (European mistletoe).